A 123-amino-acid polypeptide reads, in one-letter code: Large ribosomal subunit protein bL12 (123 aa).

The protein belongs to the bacterial ribosomal protein bL12 family. As to quaternary structure, homodimer. Part of the ribosomal stalk of the 50S ribosomal subunit. Forms a multimeric L10(L12)X complex, where L10 forms an elongated spine to which 2 to 4 L12 dimers bind in a sequential fashion. Binds GTP-bound translation factors.

In terms of biological role, forms part of the ribosomal stalk which helps the ribosome interact with GTP-bound translation factors. Is thus essential for accurate translation. The sequence is that of Large ribosomal subunit protein bL12 from Salmonella arizonae (strain ATCC BAA-731 / CDC346-86 / RSK2980).